The sequence spans 130 residues: uncharacterized protein (130 aa).

The interval methionine 1–proline 104 is disordered. Residues arginine 88–arginine 97 show a composition bias toward low complexity.

This is an uncharacterized protein from Homo sapiens (Human).